The following is an 805-amino-acid chain: Ribosome biogenesis protein ERB1 (805 aa).

Positions 1 to 105 (MVKGRKSQKA…SDFSEDDTKS (105 aa)) are disordered. Residues 8 to 22 (QKADKVTKAKKRVAD) show a composition bias toward basic and acidic residues. Acidic residues predominate over residues 23–75 (EVDESESEPELQVEGLIDAEAESEDDESFESAEENASAEEDEEDEEDEEDSDA). The required for interaction with NOP7 stretch occupies residues 264–382 (RFVPSKNEAK…LRKVPGYTES (119 aa)). The segment at 382 to 418 (SVRERFERSLDLYLAPRMRKNKLNIDPESLIPELPSP) is required for interaction with YTM1. WD repeat units lie at residues 434-473 (GHEG…EVYR), 482-522 (NPED…YDIE), 590-632 (VCKK…TQSP), 635-673 (KSKG…LVKK), 676-715 (PGAR…TPYK), 719-758 (YHDK…DMMK), and 775-805 (GHLG…MWTT).

It belongs to the WD repeat BOP1/ERB1 family. In terms of assembly, component of the NOP7 complex, composed of ERB1, NOP7 and YTM1. The complex is held together by ERB1, which interacts with NOP7 via its N-terminal domain and with YTM1 via a high-affinity interaction between the seven-bladed beta-propeller domains of the 2 proteins. The NOP7 complex associates with the 66S pre-ribosome.

It localises to the nucleus. The protein resides in the nucleolus. It is found in the nucleoplasm. Functionally, component of the NOP7 complex, which is required for maturation of the 25S and 5.8S ribosomal RNAs and formation of the 60S ribosome. The chain is Ribosome biogenesis protein ERB1 from Candida glabrata (strain ATCC 2001 / BCRC 20586 / JCM 3761 / NBRC 0622 / NRRL Y-65 / CBS 138) (Yeast).